Reading from the N-terminus, the 104-residue chain is Large ribosomal subunit protein uL23 (104 aa).

The protein belongs to the universal ribosomal protein uL23 family. Part of the 50S ribosomal subunit. Contacts protein L29, and trigger factor when it is bound to the ribosome.

In terms of biological role, one of the early assembly proteins it binds 23S rRNA. One of the proteins that surrounds the polypeptide exit tunnel on the outside of the ribosome. Forms the main docking site for trigger factor binding to the ribosome. In Rhodospirillum rubrum (strain ATCC 11170 / ATH 1.1.1 / DSM 467 / LMG 4362 / NCIMB 8255 / S1), this protein is Large ribosomal subunit protein uL23.